The sequence spans 331 residues: Glucokinase (331 aa).

16–21 is a binding site for ATP; that stretch reads GDIGGT.

Belongs to the bacterial glucokinase family.

The protein localises to the cytoplasm. The enzyme catalyses D-glucose + ATP = D-glucose 6-phosphate + ADP + H(+). The protein is Glucokinase of Pseudomonas aeruginosa (strain LESB58).